The sequence spans 872 residues: Alanine--tRNA ligase (872 aa).

4 residues coordinate Zn(2+): His-566, His-570, Cys-668, and His-672.

The protein belongs to the class-II aminoacyl-tRNA synthetase family. It depends on Zn(2+) as a cofactor.

Its subcellular location is the cytoplasm. It catalyses the reaction tRNA(Ala) + L-alanine + ATP = L-alanyl-tRNA(Ala) + AMP + diphosphate. Its function is as follows. Catalyzes the attachment of alanine to tRNA(Ala) in a two-step reaction: alanine is first activated by ATP to form Ala-AMP and then transferred to the acceptor end of tRNA(Ala). Also edits incorrectly charged Ser-tRNA(Ala) and Gly-tRNA(Ala) via its editing domain. This Lactococcus lactis subsp. cremoris (strain SK11) protein is Alanine--tRNA ligase.